A 528-amino-acid polypeptide reads, in one-letter code: Bifunctional pantoate ligase/cytidylate kinase (528 aa).

The interval 1-293 (MRLFTTIAGL…IGSCRLIDNI (293 aa)) is pantoate--beta-alanine ligase. Residue 34–41 (MGALHKGH) participates in ATP binding. H41 serves as the catalytic Proton donor. Residue Q65 coordinates (R)-pantoate. Q65 contacts beta-alanine. 160-163 (GQKD) is an ATP binding site. Q166 is a (R)-pantoate binding site. ATP contacts are provided by residues I189 and 197-200 (ISSR). Positions 294-528 (LLRNRKPIIA…YGKSSVNNII (235 aa)) are cytidylate kinase.

This sequence in the N-terminal section; belongs to the pantothenate synthetase family. In the C-terminal section; belongs to the cytidylate kinase family. Type 1 subfamily.

It localises to the cytoplasm. It catalyses the reaction (R)-pantoate + beta-alanine + ATP = (R)-pantothenate + AMP + diphosphate + H(+). The catalysed reaction is CMP + ATP = CDP + ADP. The enzyme catalyses dCMP + ATP = dCDP + ADP. Its pathway is cofactor biosynthesis; (R)-pantothenate biosynthesis; (R)-pantothenate from (R)-pantoate and beta-alanine: step 1/1. Functionally, catalyzes the condensation of pantoate with beta-alanine in an ATP-dependent reaction via a pantoyl-adenylate intermediate. In terms of biological role, catalyzes the transfer of a phosphate group from ATP to either CMP or dCMP to form CDP or dCDP and ADP, respectively. The polypeptide is Bifunctional pantoate ligase/cytidylate kinase (Trichodesmium erythraeum (strain IMS101)).